The chain runs to 281 residues: Oxidoreductase-like protein SRL4 (281 aa).

NADP(+)-binding residues include leucine 39, threonine 60, lysine 67, lysine 152, and lysine 197. Residue lysine 197 is the Lowers pKa of active site Tyr of the active site.

The protein belongs to the short-chain dehydrogenases/reductases (SDR) family.

May be involved in the regulation of dNTP production. Induces the SOS system when expressed in E.coli, therefore, it may play a role in DNA metabolism and/or in genome stability. In Saccharomyces cerevisiae (strain ATCC 204508 / S288c) (Baker's yeast), this protein is Oxidoreductase-like protein SRL4 (SRL4).